Here is a 207-residue protein sequence, read N- to C-terminus: 2,3-bisphosphoglycerate-dependent phosphoglycerate mutase (207 aa).

Residues 9–16, 22–23, arginine 61, 88–91, lysine 99, 115–116, and 159–160 each bind substrate; these read RHGQSDWN, TG, ERDY, RR, and GN. Histidine 10 (tele-phosphohistidine intermediate) is an active-site residue. The active-site Proton donor/acceptor is glutamate 88.

Belongs to the phosphoglycerate mutase family. BPG-dependent PGAM subfamily. In terms of assembly, homodimer.

The catalysed reaction is (2R)-2-phosphoglycerate = (2R)-3-phosphoglycerate. It participates in carbohydrate degradation; glycolysis; pyruvate from D-glyceraldehyde 3-phosphate: step 3/5. In terms of biological role, catalyzes the interconversion of 2-phosphoglycerate and 3-phosphoglycerate. The sequence is that of 2,3-bisphosphoglycerate-dependent phosphoglycerate mutase from Beijerinckia indica subsp. indica (strain ATCC 9039 / DSM 1715 / NCIMB 8712).